A 388-amino-acid chain; its full sequence is Lysocardiolipin acyltransferase 1 (388 aa).

2 helical membrane-spanning segments follow: residues 9–29 (FLLFLLLGSVFGSVFMLGPLL) and 46–66 (IVATWLTLPVALLELVLGVKV). Residues 85–90 (HRTRLD) carry the HXXXXD motif motif. A run of 2 helical transmembrane segments spans residues 321–341 (IILVASLLYWSVFITAACASL) and 342–362 (CLCPPAQFYFLFMVVFFLCQQ).

This sequence belongs to the 1-acyl-sn-glycerol-3-phosphate acyltransferase family.

The protein localises to the endoplasmic reticulum membrane. It catalyses the reaction a 1-acyl-sn-glycero-3-phosphate + an acyl-CoA = a 1,2-diacyl-sn-glycero-3-phosphate + CoA. It carries out the reaction a 1-acyl-sn-glycero-3-phospho-(1D-myo-inositol) + an acyl-CoA = a 1,2-diacyl-sn-glycero-3-phospho-(1D-myo-inositol) + CoA. The enzyme catalyses 1-acyl-sn-glycero-3-phospho-(1'-sn-glycerol) + an acyl-CoA = a 1,2-diacyl-sn-glycero-3-phospho-(1'-sn-glycerol) + CoA. The catalysed reaction is 1-hexadecanoyl-sn-glycero-3-phosphate + (9Z)-octadecenoyl-CoA = 1-hexadecanoyl-2-(9Z-octadecenoyl)-sn-glycero-3-phosphate + CoA. It catalyses the reaction 1-(9Z-octadecenoyl)-sn-glycero-3-phosphate + (9Z)-octadecenoyl-CoA = 1,2-di-(9Z-octadecenoyl)-sn-glycero-3-phosphate + CoA. It carries out the reaction 1-(9Z,12Z)-octadecadienoyl-sn-glycero-3-phosphate + (9Z)-octadecenoyl-CoA = 1-(9Z,12Z)-octadecadienoyl-2-(9Z)-octadecenoyl-sn-glycero-3-phosphate + CoA. The enzyme catalyses 1-(9Z,12Z,15Z)-octadecatrienoyl-sn-glycero-3-phosphate + (9Z)-octadecenoyl-CoA = 1-(9Z,12Z,15Z)-octadecatrienoyl-2-(9Z)-octadecenoyl-sn-glycero-3-phosphate + CoA. The catalysed reaction is 1-(9Z-octadecenoyl)-sn-glycero-3-phosphate + hexadecanoyl-CoA = 1-(9Z)-octadecenoyl-2-hexadecanoyl-sn-glycero-3-phosphate + CoA. It catalyses the reaction 1-(9Z-octadecenoyl)-sn-glycero-3-phosphate + octadecanoyl-CoA = 1-(9Z-octadecenoyl)-2-octadecanoyl-sn-glycero-3-phosphate + CoA. It carries out the reaction 1-acyl-sn-glycero-3-phospho-(1'-sn-glycerol) + (9Z)-octadecenoyl-CoA = 1-acyl-2-(9Z-octadecenoyl)-sn-glycero-3-phospho-(1'-sn-glycerol) + CoA. The enzyme catalyses a 1-acyl-sn-glycero-3-phospho-(1D-myo-inositol) + (9Z)-octadecenoyl-CoA = a 1-acyl-2-(9Z-octadecenoyl)-sn-glycero-3-phospho-(1D-myo-inositol) + CoA. The catalysed reaction is 1-hexadecanoyl-sn-glycero-3-phospho-(1D-myo-inositol) + hexadecanoyl-CoA = 1,2-dihexadecanoyl-sn-glycero-3-phospho-(1D-myo-inositol) + CoA. It catalyses the reaction 1-hexadecanoyl-sn-glycero-3-phospho-(1D-myo-inositol) + octadecanoyl-CoA = 1-hexadecanoyl-2-octadecanoyl-sn-glycero-3-phospho-(1D-myo-inositol) + CoA. It carries out the reaction 1-hexadecanoyl-sn-glycero-3-phospho-(1D-myo-inositol) + (9Z)-octadecenoyl-CoA = 1-hexadecanoyl-2-(9Z-octadecenoyl)-sn-glycero-3-phospho-(1D-myo-inositol) + CoA. The enzyme catalyses 1-hexadecanoyl-sn-glycero-3-phospho-(1D-myo-inositol) + (9Z,12Z)-octadecadienoyl-CoA = 1-hexadecanoyl-2-(9Z,12Z-octadecadienoyl)-sn-glycero-3-phospho-(1D-myo-inositol) + CoA. The catalysed reaction is 1-hexadecanoyl-sn-glycero-3-phospho-(1D-myo-inositol) + (5Z,8Z,11Z,14Z)-eicosatetraenoyl-CoA = 1-hexadecanoyl-2-(5Z,8Z,11Z,14Z-eicosatetraenoyl)-sn-glycero-3-phospho-D-myo-inositol + CoA. It catalyses the reaction 1-hexadecanoyl-sn-glycero-3-phospho-(1'-sn-glycerol) + hexadecanoyl-CoA = 1,2-dihexadecanoyl-sn-glycero-3-phospho-(1'-sn-glycerol) + CoA. It carries out the reaction 1-hexadecanoyl-sn-glycero-3-phospho-(1'-sn-glycerol) + octadecanoyl-CoA = 1-hexadecanoyl-2-octadecanoyl-sn-glycero-3-phospho-(1'-sn-glycerol) + CoA. The enzyme catalyses 1-hexadecanoyl-sn-glycero-3-phospho-(1'-sn-glycerol) + (9Z)-octadecenoyl-CoA = 1-hexadecanoyl-2-(9Z-octadecenoyl)-sn-glycero-3-phospho-(1'-sn-glycerol) + CoA. The catalysed reaction is 1-hexadecanoyl-sn-glycero-3-phospho-(1'-sn-glycerol) + (9Z,12Z)-octadecadienoyl-CoA = 1-hexadecanoyl-2-(9Z,12Z-octadecadienoyl)-sn-glycero-3-phospho-(1'-sn-glycerol) + CoA. It catalyses the reaction 1-tetradecanoyl-sn-glycero-3-phospho-(1'-sn-glycerol) + (9Z)-octadecenoyl-CoA = 1-tetradecanoyl-2-(9Z-octadecenoyl)-sn-glycero-3-phospho-(1'-sn-glycerol) + CoA. It carries out the reaction 1-octadecanoyl-sn-glycero-3-phospho-(1'-sn-glycerol) + (9Z)-octadecenoyl-CoA = 1-octadecanoyl-2-(9Z-octadecenoyl)-sn-glycero-3-phospho-(1'-sn-glycerol) + CoA. The enzyme catalyses 1-(9Z-octadecenoyl)-sn-glycero-3-phospho-(1'-sn-glycerol) + (9Z)-octadecenoyl-CoA = 1,2-di-(9Z-octadecenoyl)-sn-glycero-3-phospho-(1'-sn-glycerol) + CoA. The catalysed reaction is 1-hexadecanoyl-sn-glycero-3-phospho-(1D-myo-inositol) + dodecanoyl-CoA = 1-hexadecanoyl-2-dodecanoyl-sn-glycero-3-phospho-(1D-myo-inositol) + CoA. It catalyses the reaction 1',3'-bis-[1-acyl-sn-glycero-3-phospho]-glycerol + (9Z)-octadecenoyl-CoA = 1'-[1-acyl-2-(9Z)-octadecenoyl-sn-glycero-3-phospho],3'-[1-acyl,2-hydroxy-sn-glycero-3-phospho]-glycerol + CoA. It carries out the reaction 1'-[1,2-diacyl-sn-glycero-3-phospho],3'-[1-acyl-sn-glycero-3-phospho]-glycerol + (9Z)-octadecenoyl-CoA = 1'-[1,2-diacyl-sn-glycero-3-phospho],3'-[1-acyl,2-(9Z)-octadecenoyl-sn-glycero-3-phospho]-glycerol + CoA. The enzyme catalyses 1'-[1,2-diacyl-sn-glycero-3-phospho],3'-[1-acyl-sn-glycero-3-phospho]-glycerol + (9Z,12Z)-octadecadienoyl-CoA = 1'-[1,2-diacyl-sn-glycero-3-phospho],3'-[1-acyl,2-(9Z,12Z)-octadecadienoyl-sn-glycero-3-phospho]-glycerol + CoA. The catalysed reaction is 1'-[1,2-diacyl-sn-glycero-3-phospho],3'-[1-acyl-sn-glycero-3-phospho]-glycerol + dodecanoyl-CoA = 1'-[1,2-diacyl-sn-glycero-3-phospho],3'-[1-acyl,2-dodecanoyl-sn-glycero-3-phospho]-glycerol + CoA. It catalyses the reaction 1',3'-bis-[1-acyl-sn-glycero-3-phospho]-glycerol + dodecanoyl-CoA = 1'-[1-acyl-2-dodecanoyl-sn-glycero-3-phospho],3'-[1-acyl,2-hydroxy-sn-glycero-3-phospho]-glycerol + CoA. It carries out the reaction a 1-acyl-sn-glycero-3-phosphate + (9Z)-octadecenoyl-CoA = a 1-acyl-2-(9Z-octadecenoyl)-sn-glycero-3-phosphate + CoA. The enzyme catalyses 1',3'-bis-[1-acyl-sn-glycero-3-phospho]-glycerol + (9Z,12Z)-octadecadienoyl-CoA = 1'-[1-acyl-2-(9Z,12Z)-octadecadienoyl-sn-glycero-3-phospho],3'-[1-acyl,2-hydroxy-sn-glycero-3-phospho]-glycerol + CoA. The catalysed reaction is 1',3'-bis-[1-acyl-sn-glycero-3-phospho]-glycerol + hexadecanoyl-CoA = 1'-[1-acyl-2-hexadecanoyl-sn-glycero-3-phospho],3'-[1-acyl,2-hydroxy-sn-glycero-3-phospho]-glycerol + CoA. It catalyses the reaction 1',3'-bis-[1-acyl-sn-glycero-3-phospho]-glycerol + octadecanoyl-CoA = 1'-[1-acyl-2-octadecanoyl-sn-glycero-3-phospho],3'-[1-acyl,2-hydroxy-sn-glycero-3-phospho]-glycerol + CoA. It carries out the reaction 1'-[1,2-diacyl-sn-glycero-3-phospho],3'-[1-acyl-sn-glycero-3-phospho]-glycerol + octanoyl-CoA = 1'-[1,2-diacyl-sn-glycero-3-phospho],3'-[1-acyl,2-octanoyl-sn-glycero-3-phospho]-glycerol + CoA. The enzyme catalyses 1',3'-bis-[1-acyl-sn-glycero-3-phospho]-glycerol + octanoyl-CoA = 1'-[1-acyl-2-octanoyl-sn-glycero-3-phospho],3'-[1-acyl,2-hydroxy-sn-glycero-3-phospho]-glycerol + CoA. The catalysed reaction is 1'-[1,2-diacyl-sn-glycero-3-phospho],3'-[1-acyl-sn-glycero-3-phospho]-glycerol + hexadecanoyl-CoA = 1'-[1,2-diacyl-sn-glycero-3-phospho],3'-[1-acyl,2-hexadecanoyl-sn-glycero-3-phospho]-glycerol + CoA. It catalyses the reaction 1'-[1,2-diacyl-sn-glycero-3-phospho],3'-[1-acyl-sn-glycero-3-phospho]-glycerol + (5Z,8Z,11Z,14Z)-eicosatetraenoyl-CoA = 1'-[1,2-diacyl-sn-glycero-3-phospho],3'-[1-acyl,2-(5Z,8Z,11Z,14Z)-eicosatetraenoyl-sn-glycero-3-phospho]-glycerol + CoA. It carries out the reaction 1',3'-bis-[1-acyl-sn-glycero-3-phospho]-glycerol + (5Z,8Z,11Z,14Z)-eicosatetraenoyl-CoA = 1'-[1-acyl-2-(5Z,8Z,11Z,14Z)-eicosatetraenoyl-sn-glycero-3-phospho],3'-[1-acyl,2-hydroxy-sn-glycero-3-phospho]-glycerol + CoA. The enzyme catalyses a 1-acyl-sn-glycero-3-phospho-(1D-myo-inositol) + octadecanoyl-CoA = a 1-acyl-2-octadecanoyl-sn-glycero-3-phospho-(1D-myo-inositol) + CoA. The catalysed reaction is a 2-acyl-sn-glycero-3-phospho-D-myo-inositol + octadecanoyl-CoA = 1-octadecanoyl-2-acyl-sn-glycero-3-phospho-1D-myo-inositol + CoA. It functions in the pathway phospholipid metabolism; CDP-diacylglycerol biosynthesis; CDP-diacylglycerol from sn-glycerol 3-phosphate: step 2/3. Its function is as follows. Exhibits acyl-CoA:lysocardiolipin acyltransferase (ALCAT) activity; catalyzes the reacylation of lyso-cardiolipin to cardiolipin (CL), a key step in CL remodeling. Recognizes both monolysocardiolipin and dilysocardiolipin as substrates with a preference for linoleoyl-CoA and oleoyl-CoA as acyl donors. Also exhibits 1-acyl-sn-glycerol-3-phosphate acyltransferase activity (AGPAT) activity; converts 1-acyl-sn-glycerol-3- phosphate (lysophosphatidic acid or LPA) into 1,2-diacyl-sn-glycerol-3- phosphate (phosphatidic acid or PA) by incorporating an acyl moiety at the sn-2 position of the glycerol backbone. Possesses both lysophosphatidylinositol acyltransferase (LPIAT) and lysophosphatidylglycerol acyltransferase (LPGAT) activities. Required for establishment of the hematopoietic and endothelial lineages. This Danio rerio (Zebrafish) protein is Lysocardiolipin acyltransferase 1 (lclat1).